Here is a 156-residue protein sequence, read N- to C-terminus: ATP synthase subunit b', chloroplastic (156 aa).

A helical membrane pass occupies residues 24-44 (ATLPLVAIQFILLMVTLNIIL).

It belongs to the ATPase B chain family. In terms of assembly, F-type ATPases have 2 components, F(1) - the catalytic core - and F(0) - the membrane proton channel. F(1) has five subunits: alpha(3), beta(3), gamma(1), delta(1), epsilon(1). F(0) has four main subunits: a(1), b(1), b'(1) and c(10-14). The alpha and beta chains form an alternating ring which encloses part of the gamma chain. F(1) is attached to F(0) by a central stalk formed by the gamma and epsilon chains, while a peripheral stalk is formed by the delta, b and b' chains.

It localises to the plastid. The protein localises to the chloroplast thylakoid membrane. Its function is as follows. F(1)F(0) ATP synthase produces ATP from ADP in the presence of a proton or sodium gradient. F-type ATPases consist of two structural domains, F(1) containing the extramembraneous catalytic core and F(0) containing the membrane proton channel, linked together by a central stalk and a peripheral stalk. During catalysis, ATP synthesis in the catalytic domain of F(1) is coupled via a rotary mechanism of the central stalk subunits to proton translocation. Component of the F(0) channel, it forms part of the peripheral stalk, linking F(1) to F(0). The b'-subunit is a diverged and duplicated form of b found in plants and photosynthetic bacteria. This Thalassiosira pseudonana (Marine diatom) protein is ATP synthase subunit b', chloroplastic.